The sequence spans 275 residues: Light-independent protochlorophyllide reductase iron-sulfur ATP-binding protein (275 aa).

ATP is bound by residues 12 to 17 (GIGKST) and Lys41. Residue Ser16 coordinates Mg(2+). The [4Fe-4S] cluster site is built by Cys97 and Cys131. Position 182–183 (182–183 (NR)) interacts with ATP.

This sequence belongs to the NifH/BchL/ChlL family. As to quaternary structure, homodimer. Protochlorophyllide reductase is composed of three subunits; BchL, BchN and BchB. [4Fe-4S] cluster is required as a cofactor.

It carries out the reaction chlorophyllide a + oxidized 2[4Fe-4S]-[ferredoxin] + 2 ADP + 2 phosphate = protochlorophyllide a + reduced 2[4Fe-4S]-[ferredoxin] + 2 ATP + 2 H2O. It participates in porphyrin-containing compound metabolism; bacteriochlorophyll biosynthesis (light-independent). Its function is as follows. Component of the dark-operative protochlorophyllide reductase (DPOR) that uses Mg-ATP and reduced ferredoxin to reduce ring D of protochlorophyllide (Pchlide) to form chlorophyllide a (Chlide). This reaction is light-independent. The L component serves as a unique electron donor to the NB-component of the complex, and binds Mg-ATP. The chain is Light-independent protochlorophyllide reductase iron-sulfur ATP-binding protein from Chlorobium phaeobacteroides (strain DSM 266 / SMG 266 / 2430).